A 358-amino-acid polypeptide reads, in one-letter code: Neutral protease 2 homolog PADG_00776 (358 aa).

Positions 1–19 (MRRVSGILAVAAFTISAFA) are cleaved as a signal peptide. Residues 20–185 (GVIQPVAKDA…MNQFVKIAKL (166 aa)) constitute a propeptide that is removed on maturation. Cystine bridges form between C188-C259 and C266-C284. N-linked (GlcNAc...) asparagine glycosylation occurs at N249. A Zn(2+)-binding site is contributed by H309. The active site involves E310. Residues H313 and D324 each contribute to the Zn(2+) site.

The protein belongs to the peptidase M35 family. The cofactor is Zn(2+).

Its subcellular location is the secreted. The enzyme catalyses Preferential cleavage of bonds with hydrophobic residues in P1'. Also 3-Asn-|-Gln-4 and 8-Gly-|-Ser-9 bonds in insulin B chain.. In terms of biological role, secreted metalloproteinase that allows assimilation of proteinaceous substrates. Shows high activities on basic nuclear substrates such as histone and protamine. The protein is Neutral protease 2 homolog PADG_00776 of Paracoccidioides brasiliensis (strain Pb18).